Consider the following 83-residue polypeptide: Small ribosomal subunit protein bS18 (83 aa).

It belongs to the bacterial ribosomal protein bS18 family. As to quaternary structure, part of the 30S ribosomal subunit. Forms a tight heterodimer with protein bS6.

Its function is as follows. Binds as a heterodimer with protein bS6 to the central domain of the 16S rRNA, where it helps stabilize the platform of the 30S subunit. The protein is Small ribosomal subunit protein bS18 of Methylobacterium sp. (strain 4-46).